The primary structure comprises 443 residues: Mitochondrial enolase superfamily member 1 (443 aa).

Substrate contacts are provided by residues Gly-24–Asp-26 and Tyr-34. Residue Ser-148 is modified to Phosphoserine. Lys-220 provides a ligand contact to substrate. The active-site Proton donor/acceptor is Lys-222. Mg(2+) is bound at residue Asp-250. Substrate-binding positions include Asn-252, Glu-276, Glu-305, His-355 to Gly-357, and Glu-386. Mg(2+)-binding residues include Glu-276 and Glu-305. Residue His-355 is part of the active site.

This sequence belongs to the mandelate racemase/muconate lactonizing enzyme family. ENOSF1 subfamily. Mg(2+) is required as a cofactor. In terms of processing, could be sumoylated.

It localises to the mitochondrion. It catalyses the reaction L-fuconate = 2-dehydro-3-deoxy-L-fuconate + H2O. Its function is as follows. Plays a role in the catabolism of L-fucose, a sugar that is part of the carbohydrates that are attached to cellular glycoproteins. Catalyzes the dehydration of L-fuconate to 2-keto-3-deoxy-L-fuconate by the abstraction of the 2-proton to generate an enediolate intermediate that is stabilized by the magnesium ion. May down-regulate thymidylate synthase activity, possibly already at the RNA level, by promoting the degradation of TYMS mRNA via an antisense RNA-based mechanism. This chain is Mitochondrial enolase superfamily member 1 (ENOSF1), found in Bos taurus (Bovine).